The primary structure comprises 109 residues: Thiosulfate sulfurtransferase GlpE (109 aa).

Residues 16–104 (RNAGAVIVDI…WRHTYPSDVE (89 aa)) form the Rhodanese domain. C64 functions as the Cysteine persulfide intermediate in the catalytic mechanism.

It belongs to the GlpE family.

It is found in the cytoplasm. The catalysed reaction is thiosulfate + hydrogen cyanide = thiocyanate + sulfite + 2 H(+). The enzyme catalyses thiosulfate + [thioredoxin]-dithiol = [thioredoxin]-disulfide + hydrogen sulfide + sulfite + 2 H(+). Its function is as follows. Transferase that catalyzes the transfer of sulfur from thiosulfate to thiophilic acceptors such as cyanide or dithiols. May function in a CysM-independent thiosulfate assimilation pathway by catalyzing the conversion of thiosulfate to sulfite, which can then be used for L-cysteine biosynthesis. This is Thiosulfate sulfurtransferase GlpE from Stutzerimonas stutzeri (strain A1501) (Pseudomonas stutzeri).